The sequence spans 306 residues: Serine/threonine-protein kinase csk1 (306 aa).

Residues 11-306 form the Protein kinase domain; sequence LTDIRHLTDG…KVSARLSQYA (296 aa). Residues 17 to 25 and Lys-40 each bind ATP; that span reads LTDGTISEV. Asp-129 functions as the Proton acceptor in the catalytic mechanism.

The protein belongs to the protein kinase superfamily. CMGC Ser/Thr protein kinase family. CDC2/CDKX subfamily.

It carries out the reaction L-seryl-[protein] + ATP = O-phospho-L-seryl-[protein] + ADP + H(+). The enzyme catalyses L-threonyl-[protein] + ATP = O-phospho-L-threonyl-[protein] + ADP + H(+). In terms of biological role, acts as a CAK-activating kinase that specifically activates crk1 of the crk1-mcs2 CAK complex. In Schizosaccharomyces pombe (strain 972 / ATCC 24843) (Fission yeast), this protein is Serine/threonine-protein kinase csk1 (csk1).